The following is a 104-amino-acid chain: Large ribosomal subunit protein eL36 (104 aa).

Belongs to the eukaryotic ribosomal protein eL36 family.

This Tetrahymena thermophila (strain SB210) protein is Large ribosomal subunit protein eL36 (RPL36).